Reading from the N-terminus, the 474-residue chain is tRNA-2-methylthio-N(6)-dimethylallyladenosine synthase (474 aa).

Positions 3–120 (KKLHIKTWGC…LPEMINSVRG (118 aa)) constitute an MTTase N-terminal domain. Residues Cys-12, Cys-49, Cys-83, Cys-157, Cys-161, and Cys-164 each contribute to the [4Fe-4S] cluster site. In terms of domain architecture, Radical SAM core spans 143 to 375 (RAEGPTAFVS…QERINQQAMA (233 aa)). The TRAM domain occupies 378 to 441 (RRMLGTTQRI…PNSLRGKVVR (64 aa)).

It belongs to the methylthiotransferase family. MiaB subfamily. As to quaternary structure, monomer. Requires [4Fe-4S] cluster as cofactor.

It localises to the cytoplasm. The catalysed reaction is N(6)-dimethylallyladenosine(37) in tRNA + (sulfur carrier)-SH + AH2 + 2 S-adenosyl-L-methionine = 2-methylsulfanyl-N(6)-dimethylallyladenosine(37) in tRNA + (sulfur carrier)-H + 5'-deoxyadenosine + L-methionine + A + S-adenosyl-L-homocysteine + 2 H(+). Functionally, catalyzes the methylthiolation of N6-(dimethylallyl)adenosine (i(6)A), leading to the formation of 2-methylthio-N6-(dimethylallyl)adenosine (ms(2)i(6)A) at position 37 in tRNAs that read codons beginning with uridine. This Escherichia coli (strain UTI89 / UPEC) protein is tRNA-2-methylthio-N(6)-dimethylallyladenosine synthase.